The following is a 325-amino-acid chain: Probable isoaspartyl peptidase/L-asparaginase 2 (325 aa).

Catalysis depends on T195, which acts as the Nucleophile. Substrate contacts are provided by residues 223-226 and 245-248; these read RIGD and TGEG.

It belongs to the Ntn-hydrolase family. Heterotetramer of two alpha and two beta chains arranged as a dimer of alpha/beta heterodimers. Post-translationally, cleaved into an alpha and beta chain by autocatalysis; this activates the enzyme. The N-terminal residue of the beta subunit is responsible for the nucleophile hydrolase activity.

It carries out the reaction Cleavage of a beta-linked Asp residue from the N-terminus of a polypeptide.. Its function is as follows. Acts in asparagine catabolism and also in the final steps of protein degradation via hydrolysis of a range of isoaspartyl dipeptides. The chain is Probable isoaspartyl peptidase/L-asparaginase 2 from Arabidopsis thaliana (Mouse-ear cress).